Consider the following 84-residue polypeptide: MPTPLLPLLLRLLLSCLLLPAARLARQYLLPLLRRLARRLGSQDMREALLGCLLFILSQRHSPDAGEASRVDRLERRERLGPQK.

The Cytoplasmic portion of the chain corresponds to 1-4 (MPTP). The chain crosses the membrane as a helical span at residues 5-25 (LLPLLLRLLLSCLLLPAARLA). Topologically, residues 26-84 (RQYLLPLLRRLARRLGSQDMREALLGCLLFILSQRHSPDAGEASRVDRLERRERLGPQK) are extracellular. An AxLyCxL motif is present at residues 48–57 (ALLGCLLFIL). The disordered stretch occupies residues 62–84 (SPDAGEASRVDRLERRERLGPQK).

It belongs to the MYMX family. As to quaternary structure, interacts with MYMK.

Its subcellular location is the cell membrane. Its function is as follows. Myoblast-specific protein that mediates myoblast fusion, an essential step for the formation of multi-nucleated muscle fibers. Involved in membrane fusion downstream of the lipid mixing step mediated by MYMK. Acts by generating membrane stresses via its extracellular C-terminus, leading to drive fusion pore formation. Acts independently of MYMK. Involved in skeletal muscle regeneration in response to injury by mediating the fusion of satellite cells, a population of muscle stem cells, with injured myofibers. This chain is Protein myomixer, found in Homo sapiens (Human).